Consider the following 201-residue polypeptide: MFIAFEGIDGSGKSTQLNLLSQYLKSKGKKVLNIREPGGTILGEKIREILLDNNLNINKRSELLLFLASRAQLVEEVIKPHLKRGFFVLADRFSDSSIAYQGGARNIGVETVSTLNDFATDNIYPDIVFYIDIPTKIAMERLKDKNLDRLEKEGQIFLEKVRNTYLKLSKLRDNFFIIDGTKSIDNVFAEIKSIVEKHLQS.

7 to 14 contributes to the ATP binding site; sequence GIDGSGKS.

The protein belongs to the thymidylate kinase family.

The enzyme catalyses dTMP + ATP = dTDP + ADP. In terms of biological role, phosphorylation of dTMP to form dTDP in both de novo and salvage pathways of dTTP synthesis. The protein is Thymidylate kinase of Thermosipho africanus (strain TCF52B).